The following is a 194-amino-acid chain: Xanthine phosphoribosyltransferase (194 aa).

Residues L20 and N27 each contribute to the xanthine site. 5-phospho-alpha-D-ribose 1-diphosphate is bound at residue 128-132 (ANGEA). Residue K156 coordinates xanthine.

It belongs to the purine/pyrimidine phosphoribosyltransferase family. Xpt subfamily. In terms of assembly, homodimer.

It is found in the cytoplasm. It carries out the reaction XMP + diphosphate = xanthine + 5-phospho-alpha-D-ribose 1-diphosphate. It functions in the pathway purine metabolism; XMP biosynthesis via salvage pathway; XMP from xanthine: step 1/1. Functionally, converts the preformed base xanthine, a product of nucleic acid breakdown, to xanthosine 5'-monophosphate (XMP), so it can be reused for RNA or DNA synthesis. This Macrococcus caseolyticus (strain JCSC5402) (Macrococcoides caseolyticum) protein is Xanthine phosphoribosyltransferase.